The sequence spans 258 residues: RIO-type serine/threonine-protein kinase Rio1 (258 aa).

The Protein kinase domain occupies threonine 49–glutamate 258. Residues isoleucine 55 to valine 63 and lysine 80 each bind ATP. A Phosphoserine; by autocatalysis modification is found at serine 108. ATP-binding residues include glutamate 148 and isoleucine 150. Aspartate 196 functions as the Proton acceptor in the catalytic mechanism. Residues tyrosine 200, asparagine 201, and aspartate 212 each coordinate ATP. 2 residues coordinate Mg(2+): asparagine 201 and aspartate 212. The active-site 4-aspartylphosphate intermediate is aspartate 212.

Belongs to the protein kinase superfamily. RIO-type Ser/Thr kinase family. The cofactor is Mg(2+).

It carries out the reaction L-seryl-[protein] + ATP = O-phospho-L-seryl-[protein] + ADP + H(+). The catalysed reaction is L-threonyl-[protein] + ATP = O-phospho-L-threonyl-[protein] + ADP + H(+). Functionally, autophosphorylation of the rio1 protein is not necessary for maintenance of kinase activity. Prefers ATP over GTP. The yeast ortholog is involved in ribosome biogenesis. Despite the protein kinase domain is proposed to act predominantly as an ATPase. The polypeptide is RIO-type serine/threonine-protein kinase Rio1 (rio1) (Archaeoglobus fulgidus (strain ATCC 49558 / DSM 4304 / JCM 9628 / NBRC 100126 / VC-16)).